Consider the following 713-residue polypeptide: Cyclomaltodextrin glucanotransferase (713 aa).

Residues 1 to 27 (MKKISKLTTALALSLSLALSLLGPAHA) form the signal peptide. Residues 28 to 165 (APDTSVSNKQ…NIKVIIDFAP (138 aa)) form an A1 region. Asp54, Asn56, Asn59, and Asn60 together coordinate Ca(2+). A disulfide bridge connects residues Cys70 and Cys77. Residues Gly78 and Asp80 each contribute to the Ca(2+) site. 127–128 (YW) contributes to the substrate binding site. Position 166 (Asn166) interacts with Ca(2+). The b stretch occupies residues 166 to 229 (NHTSPASLDQ…NLYDLADLNH (64 aa)). Position 167 (His167) interacts with substrate. Position 217 (Ile217) interacts with Ca(2+). 220-223 (NLYD) contributes to the substrate binding site. Ca(2+) is bound at residue Asp226. An A2 region spans residues 230 to 433 (NNSTVDTYLK…LRKSNPAIAY (204 aa)). Residue Arg254 coordinates substrate. The active-site Nucleophile is the Asp256. 259–260 (KH) is a binding site for substrate. A Ca(2+)-binding site is contributed by His260. The Proton donor role is filled by Glu284. Substrate is bound by residues His354, Asp398, and Arg402. Positions 434–522 (GTTQERWINN…GTAVWQYTTA (89 aa)) are c. Residues 523-609 (VTAPTIGHVG…SNVHDNFEVL (87 aa)) form a d region. Positions 526 to 607 (PTIGHVGPMM…TSSNVHDNFE (82 aa)) constitute an IPT/TIG domain. Residues 608–713 (VLSGDQVSVR…TATINVNWQP (106 aa)) enclose the CBM20 domain. The tract at residues 610 to 713 (SGDQVSVRFV…TATINVNWQP (104 aa)) is e.

It belongs to the glycosyl hydrolase 13 family. As to quaternary structure, monomer. Ca(2+) serves as cofactor.

It localises to the secreted. It catalyses the reaction Cyclizes part of a (1-&gt;4)-alpha-D-glucan chain by formation of a (1-&gt;4)-alpha-D-glucosidic bond.. This Bacillus sp. (strain 17-1) protein is Cyclomaltodextrin glucanotransferase (cgt).